The sequence spans 516 residues: Circadian clock oscillator protein KaiC (516 aa).

KaiC domains lie at 1–244 (MNQP…INIF) and 258–516 (ARIS…TLPE). ATP-binding residues include Gly46, Thr47, Gly48, Lys49, Thr50, Leu51, Ser86, Lys221, Leu222, Arg223, Thr225, His227, Thr237, Thr287, Gly288, Thr289, Gly290, Lys291, Thr292, and Leu293. Thr50 is a binding site for Mg(2+). Thr292 is a binding site for Mg(2+). Residue Glu315 coordinates Mg(2+). Residue Trp328 participates in ATP binding. At Ser428 the chain carries Phosphoserine; by autocatalysis. Thr429 is subject to Phosphothreonine; by autocatalysis. ATP-binding residues include Arg448, Lys454, Met455, Arg456, Ser458, His460, and Lys462.

Belongs to the KaiC family. As to quaternary structure, homohexamer; hexamerization is dependent on ATP-binding. The KaiABC complex composition changes during the circadian cycle to control KaiC phosphorylation. Complexes KaiC(6), KaiA(2-4):KaiC(6), KaiB(6):KaiC(6) and KaiC(6):KaiB(6):KaiA(12) are among the most important forms, many form cooperatively. KaiC interacts with SasA, activating its autokinase function and leading to RpaA activation. Requires Mg(2+) as cofactor. Phosphorylated on serine and threonine residues by autocatalysis. Has a 4 step phosphorylation cycle; the autokinase acts first on Thr-429, then Ser-428. When Ser-428 is modified KaiC switches to an autophosphatase mode, acting first on phospho-Thr-429 then phospho-Ser-428.

The enzyme catalyses L-seryl-[protein] + ATP = O-phospho-L-seryl-[protein] + ADP + H(+). It catalyses the reaction L-threonyl-[protein] + ATP = O-phospho-L-threonyl-[protein] + ADP + H(+). The catalysed reaction is ATP + H2O = ADP + phosphate + H(+). Its activity is regulated as follows. The interaction with KaiA enhances its phosphorylation status, while the interaction with KaiB decreases it. In terms of biological role, central component of the KaiABC oscillator complex, which constitutes the main circadian regulator in cyanobacteria. Complex composition changes during the circadian cycle to control KaiC phosphorylation. KaiA stimulates KaiC autophosphorylation, while KaiB sequesters KaiA, leading to KaiC autodephosphorylation. Clock output pathways impact the RpaA transcriptional regulator. KaiC enhances the autophosphorylation activity of SasA, which then transfers its phosphate group to RpaA to activate it. KaiB and KaiC together enhance the phospho-RpaA dephosphatase activity of CikA. Functionally, has a weak, temperature-independent ATPase activity; ATPase activity defines the circadian period. The phosphorylation state of KaiC modulates its ATPase activity and effects KaiB binding. The sequence is that of Circadian clock oscillator protein KaiC from Picosynechococcus sp. (strain ATCC 27264 / PCC 7002 / PR-6) (Agmenellum quadruplicatum).